A 1059-amino-acid chain; its full sequence is Protein cappuccino (1059 aa).

2 stretches are compositionally biased toward polar residues: residues 62–80 (AAVT…NESG) and 90–123 (ATTS…SAAS). Disordered regions lie at residues 62–146 (AAVT…GTPT) and 448–647 (QTES…TAPP). The span at 133–142 (LPLPPPPPGF) shows a compositional bias: pro residues. Over residues 468–481 (SDNESAKEDGEKPH) the composition is skewed to basic and acidic residues. In terms of domain architecture, FH1 spans 480–560 (PHAVAPPPPP…PPPPMSASPS (81 aa)). A compositionally biased stretch (pro residues) spans 483–541 (VAPPPPPPPPPLHAFVAPPPPPPPPPPPPPPLANYGAPPPPPPPPPGSGSAPPPPPPAP). The region spanning 585–1032 (RKSAVNPPKP…KKSKQAQIES (448 aa)) is the FH2 domain. A compositionally biased stretch (polar residues) spans 620–629 (TDSTENSGSS). The interval 1049-1059 (KERMLMRRSKN) is important for interaction with spir.

The protein belongs to the formin homology family. Cappuccino subfamily. Interacts with wash. Interacts with spir.

The protein localises to the cytoplasm. It localises to the cytoskeleton. Its subcellular location is the cytosol. It is found in the membrane. The protein resides in the cytoplasmic vesicle membrane. Functionally, acts as an actin nucleation factor and promotes assembly of actin filaments together with spir. May play a role in intracellular vesicle transport along actin fibers, providing a novel link between actin cytoskeleton dynamics and intracellular transport. The protein is Protein cappuccino (capu) of Drosophila melanogaster (Fruit fly).